Reading from the N-terminus, the 171-residue chain is RNA silencing suppressor p19 (171 aa).

Residues 1–15 are compositionally biased toward basic and acidic residues; that stretch reads MERAIPGNDTREPAY. Positions 1-32 are disordered; that stretch reads MERAIPGNDTREPAYGERWNGGPGGSTSPFQL.

This sequence belongs to the tombusvirus protein p19 family. In terms of assembly, homodimer.

Viral suppressor of RNA silencing which binds specifically to silencing RNAs (siRNAs). Acts as a molecular caliper to specifically select siRNAs based on the length of the duplex region of the RNA. The chain is RNA silencing suppressor p19 from Capsicum annuum (Capsicum pepper).